A 306-amino-acid chain; its full sequence is MLKFIFKRLLEALPTLFILITFSFFLMRLAPGSPFTSERAYPPEVMANIEAKYHLNEPLYKQYFLYLENLSKGDFGPSFKYKDQSVNDLIASAFPVSIKLGMVAFAFAVVLGVTAGTLAALNQNSRWDYILMSFSMLGVIMPSFVFAPVLVLIFAIYLGWLPAGGWNGGTAMYMILPVASLTIAYVAGIARIMRGSMIEVLHSNFIRTAKAKGLSMSRIILKHALRPALLPVITYLGPAFVGIITGSMVIESVFGLPGMGLLFVNGALNRDYSLVLSLTILVGTLTILFNAIVDILYAIIDPKIRY.

The Cytoplasmic portion of the chain corresponds to 1-8 (MLKFIFKR). The helical transmembrane segment at 9-29 (LLEALPTLFILITFSFFLMRL) threads the bilayer. Topologically, residues 30-99 (APGSPFTSER…IASAFPVSIK (70 aa)) are periplasmic. The ABC transmembrane type-1 domain occupies 94–293 (FPVSIKLGMV…TLTILFNAIV (200 aa)). Residues 100–120 (LGMVAFAFAVVLGVTAGTLAA) traverse the membrane as a helical segment. Residues 121-135 (LNQNSRWDYILMSFS) are Cytoplasmic-facing. A helical membrane pass occupies residues 136–156 (MLGVIMPSFVFAPVLVLIFAI). Residues 157–169 (YLGWLPAGGWNGG) lie on the Periplasmic side of the membrane. The helical transmembrane segment at 170–190 (TAMYMILPVASLTIAYVAGIA) threads the bilayer. The Cytoplasmic portion of the chain corresponds to 191–229 (RIMRGSMIEVLHSNFIRTAKAKGLSMSRIILKHALRPAL). Residues 230–250 (LPVITYLGPAFVGIITGSMVI) form a helical membrane-spanning segment. The Periplasmic portion of the chain corresponds to 251–279 (ESVFGLPGMGLLFVNGALNRDYSLVLSLT). The helical transmembrane segment at 280–300 (ILVGTLTILFNAIVDILYAII) threads the bilayer. The Cytoplasmic segment spans residues 301–306 (DPKIRY).

Belongs to the binding-protein-dependent transport system permease family. OppBC subfamily. As to quaternary structure, the complex is composed of two ATP-binding proteins (OppD and OppF), two transmembrane proteins (OppB and OppC) and a solute-binding protein (OppA).

The protein resides in the cell inner membrane. In terms of biological role, part of the ABC transporter complex OppABCDF involved in the uptake of oligopeptides. Probably responsible for the translocation of the substrate across the membrane. The protein is Oligopeptide transport system permease protein OppB (oppB) of Haemophilus influenzae (strain ATCC 51907 / DSM 11121 / KW20 / Rd).